Here is a 261-residue protein sequence, read N- to C-terminus: MKHGLNGLLLAFQFLTTVPITRQIPWTARSARWSIVCYPLTGLVLGGLLVSLYLLLSPFLSPLVLAALLVTLSIFYSGGLHLDGWMDVSDAFLSRRDRETKLIILKDSRVGAFAVMTTILLIGWKVLLLMELIALAPREFTWLLLLVPVCLRWMIIVQLIYGKAASDQGMAASLLPYVTTHVKNASRVWFLFIAGACFLLLQNVILTLCFLLMIWLFPLFWLRVCKREIGGMSGDTIGASIEGGELFLWGIMWTFFLSVTA.

7 helical membrane passes run 4-26 (GLNG…QIPW), 40-60 (LTGL…SPFL), 62-82 (PLVL…GLHL), 110-130 (VGAF…LLLM), 140-160 (FTWL…VQLI), 197-217 (CFLL…IWLF), and 237-257 (IGAS…TFFL).

Belongs to the CobS family. The cofactor is Mg(2+).

It localises to the cell membrane. It carries out the reaction alpha-ribazole + adenosylcob(III)inamide-GDP = adenosylcob(III)alamin + GMP + H(+). The enzyme catalyses alpha-ribazole 5'-phosphate + adenosylcob(III)inamide-GDP = adenosylcob(III)alamin 5'-phosphate + GMP + H(+). The protein operates within cofactor biosynthesis; adenosylcobalamin biosynthesis; adenosylcobalamin from cob(II)yrinate a,c-diamide: step 7/7. In terms of biological role, joins adenosylcobinamide-GDP and alpha-ribazole to generate adenosylcobalamin (Ado-cobalamin). Also synthesizes adenosylcobalamin 5'-phosphate from adenosylcobinamide-GDP and alpha-ribazole 5'-phosphate. The polypeptide is Adenosylcobinamide-GDP ribazoletransferase (Halalkalibacterium halodurans (strain ATCC BAA-125 / DSM 18197 / FERM 7344 / JCM 9153 / C-125) (Bacillus halodurans)).